Consider the following 34-residue polypeptide: Photosystem II reaction center protein M (34 aa).

A helical transmembrane segment spans residues 5 to 25; the sequence is ILAFIATALFILVPTAFLLII.

The protein belongs to the PsbM family. In terms of assembly, PSII is composed of 1 copy each of membrane proteins PsbA, PsbB, PsbC, PsbD, PsbE, PsbF, PsbH, PsbI, PsbJ, PsbK, PsbL, PsbM, PsbT, PsbX, PsbY, PsbZ, Psb30/Ycf12, at least 3 peripheral proteins of the oxygen-evolving complex and a large number of cofactors. It forms dimeric complexes.

It localises to the plastid. Its subcellular location is the chloroplast thylakoid membrane. One of the components of the core complex of photosystem II (PSII). PSII is a light-driven water:plastoquinone oxidoreductase that uses light energy to abstract electrons from H(2)O, generating O(2) and a proton gradient subsequently used for ATP formation. It consists of a core antenna complex that captures photons, and an electron transfer chain that converts photonic excitation into a charge separation. This subunit is found at the monomer-monomer interface. The sequence is that of Photosystem II reaction center protein M from Cenchrus americanus (Pearl millet).